A 677-amino-acid polypeptide reads, in one-letter code: Sulfate transporter 2.1 (677 aa).

Topologically, residues 1 to 118 (MKERDSESFE…NYKLTMFKND (118 aa)) are cytoplasmic. The interval 23–54 (STHMIQMAMANSGSSAAAQAGQDQPDRSKWLL) is disordered. Low complexity predominate over residues 28-44 (QMAMANSGSSAAAQAGQ). A helical membrane pass occupies residues 119–139 (LMAGLTLASLCIPQSIGYATL). The Extracellular portion of the chain corresponds to 140-141 (AK). A helical membrane pass occupies residues 142–162 (LDPQYGLYTSVVPPLIYALMG). The Cytoplasmic portion of the chain corresponds to 163-166 (TSRE). The helical transmembrane segment at 167–187 (IAIGPVAVVSLLISSMLQKLI) threads the bilayer. Residues 188 to 198 (DPETDPLGYKK) are Extracellular-facing. A helical transmembrane segment spans residues 199 to 219 (LVLTTTFFAGIFQASFGLFRL). Residues 220 to 221 (GF) lie on the Cytoplasmic side of the membrane. The helical transmembrane segment at 222–242 (LVDFLSHAAIVGFMGGAAIVI) threads the bilayer. Residues 243–278 (GLQQLKGLLGITNFTTNTDIVSVLRAVWRSCQQQWS) are Extracellular-facing. An N-linked (GlcNAc...) asparagine glycan is attached at asparagine 255. Residues 279 to 299 (PHTFILGCSFLSFILITRFIG) form a helical membrane-spanning segment. At 300–304 (KKYKK) the chain is on the cytoplasmic side. The chain crosses the membrane as a helical span at residues 305–325 (LFWLPAIAPLIAVVVSTLMVF). The Extracellular portion of the chain corresponds to 326 to 360 (LTKADEHGVKTVRHIKGGLNPMSIQDLDFNTPHLG). The chain crosses the membrane as a helical span at residues 361 to 381 (QIAKIGLIIAIVALTEAIAVG). Residues 382-397 (RSFAGIKGYRLDGNKE) are Cytoplasmic-facing. A helical membrane pass occupies residues 398–418 (MVAIGFMNVLGSFTSCYAATG). Over 419–426 (SFSRTAVN) the chain is Extracellular. Residues 427 to 447 (FAAGCETAMSNIVMAVTVFVA) traverse the membrane as a helical segment. The Cytoplasmic portion of the chain corresponds to 448–454 (LECLTRL). Residues 455–475 (LYYTPIAILASIILSALPGLI) form a helical membrane-spanning segment. The Extracellular portion of the chain corresponds to 476–490 (NINEAIHIWKVDKFD). Residues 491-511 (FLALIGAFFGVLFASVEIGLL) form a helical membrane-spanning segment. Over 512–677 (VAVVISFAKI…ALDACFGLKV (166 aa)) the chain is Cytoplasmic. In terms of domain architecture, STAS spans 548 to 672 (YPMTVKTPGV…LTIGEALDAC (125 aa)).

Belongs to the SLC26A/SulP transporter (TC 2.A.53) family. In terms of tissue distribution, expressed in root cap, central cylinder of roots and in vascular tissues of leaves.

It localises to the membrane. Its function is as follows. Low-affinity H(+)/sulfate cotransporter that may be involved in root-to-shoot translocation of sulfate. Plays a central role in the regulation of sulfate assimilation. This Arabidopsis thaliana (Mouse-ear cress) protein is Sulfate transporter 2.1 (SULTR2;1).